A 186-amino-acid polypeptide reads, in one-letter code: MQNKQSNSIRTVVATGIGAAVIFVLMKFVAIPTGVPNTQVNVAMGFLALLGAIFGPVAAGLAVFIGHALNDFVTYGSPWWTWVIVDGLIGVAFGLAKNRLKIENGVLGTAKLVWFNIYQIIVNFIGWVLLAPTGDIIIYHEPANKVYLQGVITWIADSISVAIIGTILLVLYARTRTQRGSLTKER.

5 helical membrane passes run 12-32, 45-65, 76-96, 112-132, and 151-171; these read VVAT…VAIP, GFLA…AVFI, GSPW…FGLA, LVWF…LLAP, and VITW…LLVL.

It belongs to the UPF0397 family.

It localises to the cell membrane. The polypeptide is UPF0397 protein lp_0150 (Lactiplantibacillus plantarum (strain ATCC BAA-793 / NCIMB 8826 / WCFS1) (Lactobacillus plantarum)).